A 364-amino-acid chain; its full sequence is Aminomethyltransferase (364 aa).

This sequence belongs to the GcvT family. The glycine cleavage system is composed of four proteins: P, T, L and H.

It carries out the reaction N(6)-[(R)-S(8)-aminomethyldihydrolipoyl]-L-lysyl-[protein] + (6S)-5,6,7,8-tetrahydrofolate = N(6)-[(R)-dihydrolipoyl]-L-lysyl-[protein] + (6R)-5,10-methylene-5,6,7,8-tetrahydrofolate + NH4(+). The glycine cleavage system catalyzes the degradation of glycine. The sequence is that of Aminomethyltransferase from Escherichia coli O17:K52:H18 (strain UMN026 / ExPEC).